A 141-amino-acid chain; its full sequence is Hemoglobin subunit beta-C (141 aa).

A Globin domain is found at proline 1 to histidine 141. The heme b site is built by histidine 58 and histidine 87.

This sequence belongs to the globin family. Heterotetramer of two alpha chains and two beta chains. As to expression, red blood cells.

In terms of biological role, involved in oxygen transport from the lung to the various peripheral tissues. This Ovis aries musimon (Mouflon) protein is Hemoglobin subunit beta-C (HBBC).